A 223-amino-acid polypeptide reads, in one-letter code: MCHGGTWAGDYVLNVIATGLSLKARGKRRRQRWVDDGRVLALGESRRSSAISVADVVASLTRDVADFPVPGVEFKDLTPLFADRRGLAAVTEALADRASGADLVAGVDARGFLVAAAVATRLEVGVLAVRKGGKLPRPVLSEEYYREYGAATLEILAEGIEVAGRRVVIIDDVLATGGTIGATRRLLERGGANVAGAAVVVELAGLSGRAALAPLPVHSLSRL.

The protein belongs to the purine/pyrimidine phosphoribosyltransferase family. As to quaternary structure, homodimer.

It is found in the cytoplasm. The enzyme catalyses AMP + diphosphate = 5-phospho-alpha-D-ribose 1-diphosphate + adenine. It functions in the pathway purine metabolism; AMP biosynthesis via salvage pathway; AMP from adenine: step 1/1. Functionally, catalyzes a salvage reaction resulting in the formation of AMP, that is energically less costly than de novo synthesis. The chain is Adenine phosphoribosyltransferase from Mycobacterium bovis (strain ATCC BAA-935 / AF2122/97).